The primary structure comprises 237 residues: Orotidine 5'-phosphate decarboxylase (237 aa).

Substrate contacts are provided by residues aspartate 17, lysine 39, aspartate 66–threonine 75, threonine 121, arginine 182, glutamine 191, glycine 211, and arginine 212. Lysine 68 acts as the Proton donor in catalysis.

It belongs to the OMP decarboxylase family. Type 1 subfamily. In terms of assembly, homodimer.

It carries out the reaction orotidine 5'-phosphate + H(+) = UMP + CO2. It functions in the pathway pyrimidine metabolism; UMP biosynthesis via de novo pathway; UMP from orotate: step 2/2. Its function is as follows. Catalyzes the decarboxylation of orotidine 5'-monophosphate (OMP) to uridine 5'-monophosphate (UMP). This is Orotidine 5'-phosphate decarboxylase from Bradyrhizobium diazoefficiens (strain JCM 10833 / BCRC 13528 / IAM 13628 / NBRC 14792 / USDA 110).